We begin with the raw amino-acid sequence, 763 residues long: Hormone-sensitive lipase (763 aa).

An Involved in the stabilization of the negatively charged intermediate by the formation of the oxyanion hole motif is present at residues 350-352 (HGG). Serine 424 is a catalytic residue. Residue serine 552 is modified to Phosphoserine. Serine 554 carries the phosphoserine; by AMPK modification. A phosphoserine mark is found at serine 595, serine 627, and serine 649. Residues 616 to 627 (AREEAEAKEGLS) show a composition bias toward basic and acidic residues. The tract at residues 616–652 (AREEAEAKEGLSAKDGSSRVSNAFPEGFHPRRTSQGA) is disordered. Residues aspartate 692 and histidine 722 contribute to the active site.

Belongs to the 'GDXG' lipolytic enzyme family. Monomer and homodimer. Interacts with CAVIN1 in the adipocyte cytoplasm. Interacts with PLIN5. Phosphorylation by AMPK reduces its translocation towards the lipid droplets.

The protein localises to the cell membrane. It is found in the membrane. Its subcellular location is the caveola. It localises to the cytoplasm. The protein resides in the cytosol. The protein localises to the lipid droplet. The enzyme catalyses a diacylglycerol + H2O = a monoacylglycerol + a fatty acid + H(+). It carries out the reaction a triacylglycerol + H2O = a diacylglycerol + a fatty acid + H(+). The catalysed reaction is a monoacylglycerol + H2O = glycerol + a fatty acid + H(+). It catalyses the reaction Hydrolyzes glycerol monoesters of long-chain fatty acids.. The enzyme catalyses 1,2-di-(9Z-octadecenoyl)-glycerol + (9Z)-octadecenoate + H(+) = 1,2,3-tri-(9Z-octadecenoyl)-glycerol + H2O. It carries out the reaction 2,3-di-(9Z)-octadecenoyl-sn-glycerol + H2O = 2-(9Z-octadecenoyl)-glycerol + (9Z)-octadecenoate + H(+). The catalysed reaction is cholesteryl (9Z-octadecenoate) + H2O = cholesterol + (9Z)-octadecenoate + H(+). It catalyses the reaction 1,2,3-tri-(9Z-octadecenoyl)-glycerol + H2O = di-(9Z)-octadecenoylglycerol + (9Z)-octadecenoate + H(+). The enzyme catalyses all-trans-retinyl hexadecanoate + H2O = all-trans-retinol + hexadecanoate + H(+). It carries out the reaction 1,2-di-(9Z-octadecenoyl)-glycerol + H2O = (9Z-octadecenoyl)-glycerol + (9Z)-octadecenoate + H(+). The catalysed reaction is 2-(5Z,8Z,11Z,14Z-eicosatetraenoyl)-glycerol + H2O = glycerol + (5Z,8Z,11Z,14Z)-eicosatetraenoate + H(+). It catalyses the reaction 1-(9Z-octadecenoyl)-glycerol + H2O = glycerol + (9Z)-octadecenoate + H(+). The enzyme catalyses 2-(9Z-octadecenoyl)-glycerol + H2O = glycerol + (9Z)-octadecenoate + H(+). It carries out the reaction 1-O-hexadecyl-2-acetyl-sn-glycerol + H2O = 1-O-hexadecyl-sn-glycerol + acetate + H(+). The catalysed reaction is 1,2-di-(9Z-octadecenoyl)-sn-glycerol + H2O = (9Z-octadecenoyl)-glycerol + (9Z)-octadecenoate + H(+). It catalyses the reaction 1,3-di-(9Z-octadecenoyl)-glycerol + H2O = 1-(9Z-octadecenoyl)-glycerol + (9Z)-octadecenoate + H(+). The enzyme catalyses 1,2-di-(9Z-octadecenoyl)-glycerol + H2O = 2-(9Z-octadecenoyl)-glycerol + (9Z)-octadecenoate + H(+). It functions in the pathway glycerolipid metabolism; triacylglycerol degradation. In terms of biological role, lipase with broad substrate specificity, catalyzing the hydrolysis of triacylglycerols (TAGs), diacylglycerols (DAGs), monoacylglycerols (MAGs), cholesteryl esters and retinyl esters. Shows a preferential hydrolysis of DAGs over TAGs and MAGs. Preferentially hydrolyzes fatty acid (FA) esters at the sn-3 position of the glycerol backbone in DAGs and FA esters at the sn-1 and sn-2 positions of the glycerol backbone in TAGs. Catalyzes the hydrolysis of 2-arachidonoylglycerol, an endocannabinoid and of 2-acetyl monoalkylglycerol ether, the penultimate precursor of the pathway for de novo synthesis of platelet-activating factor. In adipose tissue and heart, it primarily hydrolyzes stored triglycerides to free fatty acids, while in steroidogenic tissues, it principally converts cholesteryl esters to free cholesterol for steroid hormone production. In Ictidomys tridecemlineatus (Thirteen-lined ground squirrel), this protein is Hormone-sensitive lipase (LIPE).